Consider the following 539-residue polypeptide: CTP synthase (539 aa).

The tract at residues 1–267 (MTKYIFVTGG…DQKVVDFLHI (267 aa)) is amidoligase domain. Residue Ser-13 coordinates CTP. Ser-13 provides a ligand contact to UTP. 14–19 (SLGKGI) serves as a coordination point for ATP. Tyr-54 is a binding site for L-glutamine. Residue Asp-71 participates in ATP binding. Mg(2+) contacts are provided by Asp-71 and Glu-141. CTP-binding positions include 148 to 150 (DME), 188 to 193 (KSKPTQ), and Lys-224. Residues 188–193 (KSKPTQ) and Lys-224 contribute to the UTP site. Residues 294–537 (KITLVGKYVE…IGAASGLQVD (244 aa)) form the Glutamine amidotransferase type-1 domain. Gly-356 contacts L-glutamine. Cys-383 functions as the Nucleophile; for glutamine hydrolysis in the catalytic mechanism. L-glutamine contacts are provided by residues 384–387 (LGMQ), Glu-407, and Arg-465. Active-site residues include His-510 and Glu-512.

Belongs to the CTP synthase family. In terms of assembly, homotetramer.

The enzyme catalyses UTP + L-glutamine + ATP + H2O = CTP + L-glutamate + ADP + phosphate + 2 H(+). The catalysed reaction is L-glutamine + H2O = L-glutamate + NH4(+). It catalyses the reaction UTP + NH4(+) + ATP = CTP + ADP + phosphate + 2 H(+). The protein operates within pyrimidine metabolism; CTP biosynthesis via de novo pathway; CTP from UDP: step 2/2. Allosterically activated by GTP, when glutamine is the substrate; GTP has no effect on the reaction when ammonia is the substrate. The allosteric effector GTP functions by stabilizing the protein conformation that binds the tetrahedral intermediate(s) formed during glutamine hydrolysis. Inhibited by the product CTP, via allosteric rather than competitive inhibition. Its function is as follows. Catalyzes the ATP-dependent amination of UTP to CTP with either L-glutamine or ammonia as the source of nitrogen. Regulates intracellular CTP levels through interactions with the four ribonucleotide triphosphates. This chain is CTP synthase, found in Lactobacillus delbrueckii subsp. bulgaricus (strain ATCC 11842 / DSM 20081 / BCRC 10696 / JCM 1002 / NBRC 13953 / NCIMB 11778 / NCTC 12712 / WDCM 00102 / Lb 14).